The chain runs to 146 residues: MLKGIHPALSPELLKVLAEMGHGDEIVLSDAHFPAHQLHHKVIRADGIQIATLLEAITPLFEYDQYVERPLAMMQAVHGDSLDLAVEERYLAAIAKINGKAPLVERVERFAFYDRAKIAYAVVITGELAKYGNIILKKGVTPVLTD.

His-22 functions as the Proton donor in the catalytic mechanism. Substrate-binding positions include Asp-30, Arg-109, and Tyr-131–Asn-133.

The protein belongs to the RbsD / FucU family. FucU mutarotase subfamily. As to quaternary structure, homodecamer.

Its subcellular location is the cytoplasm. It catalyses the reaction alpha-L-fucose = beta-L-fucose. It functions in the pathway carbohydrate metabolism; L-fucose metabolism. Its function is as follows. Involved in the anomeric conversion of L-fucose. The protein is L-fucose mutarotase of Glaesserella parasuis serovar 5 (strain SH0165) (Haemophilus parasuis).